Consider the following 210-residue polypeptide: uncharacterized protein (210 aa).

This is an uncharacterized protein from Sulfolobus islandicus filamentous virus (isolate Iceland/Hveragerdi) (SIFV).